Consider the following 1476-residue polypeptide: Glucosyltransferase-I (1476 aa).

An N-terminal signal peptide occupies residues 1–34 (MDKKVRYKLRKVKKRWVTVSVASAVMTLTTLSGG). Disordered stretches follow at residues 42-89 (ESKS…ISSS) and 102-141 (PYTV…TEAD). 2 stretches are compositionally biased toward polar residues: residues 43-81 (SKSQ…QTNH) and 102-139 (PYTV…QTTE). 2 Cell wall-binding repeats span residues 159-178 (LPNV…NGKV) and 179-199 (RTNF…TGAY). The tract at residues 200 to 1051 (TDTSIDTVNK…NTYFNISDNK (852 aa)) is catalytic; approximate. Cell wall-binding repeat units follow at residues 1087–1106 (KNTF…NGYM), 1107–1126 (VTGA…NGLQ), 1170–1189 (SVGL…MGYQ), 1214–1234 (RNRF…DGAA), 1235–1254 (VTGS…NGVQ), 1279–1299 (RNRF…NGYA), 1300–1319 (VTGA…NGVQ), 1344–1364 (RNRF…NGYA), 1365–1384 (VTGA…NGVQ), 1409–1429 (RNRF…NGYA), and 1430–1449 (VTGA…NGVQ).

It belongs to the glycosyl hydrolase 70 family.

The protein resides in the secreted. The enzyme catalyses [(1-&gt;6)-alpha-D-glucosyl](n) + sucrose = [(1-&gt;6)-alpha-D-glucosyl](n+1) + D-fructose. In terms of biological role, production of extracellular glucans, that are thought to play a key role in the development of the dental plaque because of their ability to adhere to smooth surfaces and mediate the aggregation of bacterial cells and food debris. The chain is Glucosyltransferase-I (gtfB) from Streptococcus mutans serotype c (strain ATCC 700610 / UA159).